Consider the following 160-residue polypeptide: Ubiquitin-conjugating enzyme E2 16 (160 aa).

The UBC core domain maps to 3–153 (SSIKRLHKEY…VRCTTYLYAK (151 aa)). Cys-90 functions as the Glycyl thioester intermediate in the catalytic mechanism.

It belongs to the ubiquitin-conjugating enzyme family.

The enzyme catalyses S-ubiquitinyl-[E1 ubiquitin-activating enzyme]-L-cysteine + [E2 ubiquitin-conjugating enzyme]-L-cysteine = [E1 ubiquitin-activating enzyme]-L-cysteine + S-ubiquitinyl-[E2 ubiquitin-conjugating enzyme]-L-cysteine.. The protein operates within protein modification; protein ubiquitination. Its function is as follows. Catalyzes the covalent attachment of ubiquitin to other proteins. This Schizosaccharomyces pombe (strain 972 / ATCC 24843) (Fission yeast) protein is Ubiquitin-conjugating enzyme E2 16 (ubc16).